Consider the following 872-residue polypeptide: UPF0182 protein Noc_0961 (872 aa).

A run of 7 helical transmembrane segments spans residues 8 to 28, 56 to 76, 109 to 129, 159 to 179, 207 to 227, 254 to 274, and 282 to 302; these read FLILGLSIVVLAVFLLIAGFE, LVVFIQVSIVFFLIFFVNFWV, SLWIYTPLSLVLSIIIAWPLF, LFSFPIYVLILQRLLISFLLL, WHLSILVLMVFFIEIWDFFLQ, PFIWLSMFFLLGIAFFLLLFI, and TLAVFSLLFILSLGARHFHFL.

Belongs to the UPF0182 family.

The protein localises to the cell membrane. This Nitrosococcus oceani (strain ATCC 19707 / BCRC 17464 / JCM 30415 / NCIMB 11848 / C-107) protein is UPF0182 protein Noc_0961.